Here is a 469-residue protein sequence, read N- to C-terminus: MATASEILKQIKENDVKFVDLRFTDRRASLQHVTMDVVCVDEDMFADGVMFDGFSIGGWKAINESDMVLMPDTETVHMDPFFAQSTMVIVCDILDPVSGEAYNRDRRGTAKKAEAYLKASGIGDTVFVGREAEFFVFDDVKYKADPYNTGFKLDSTELPSNDDTDYETGNLGHRPRVKGGYFPVPPVDSAQDMRSEMLTVLSEMGVVVEKHHHEVAAAQHDTLVRNADELGIKFKMQIYKYVVHQVANAYGKTATFMPKPIFGDNGSGMHVHQSIWKGGKPTFAGDEYAGLSESCLFYIGGIIKHAKAINAFTNPSTNSYKRFVPGYEAPVLLAYSARNRSASCRIPFGSNPKAKRVEVRFPDPTANPYLAFAAMLMAGLDGIKNKIHPGKAMDKDLYDLPPKELKKIPTVCGSLRQALESLDKDRKFLTAGGVFDDDQIDAFIELKMAEVMRFEMTPHPVEYDMYYSA.

The region spanning 14–99 (NDVKFVDLRF…VCDILDPVSG (86 aa)) is the GS beta-grasp domain. Residues 106–469 (RRGTAKKAEA…PVEYDMYYSA (364 aa)) form the GS catalytic domain. The Mg(2+) site is built by Glu-131 and Glu-133. Position 209 (Glu-209) interacts with ATP. Residues Glu-214 and Asp-221 each coordinate Mg(2+). L-glutamate-binding positions include 265–266 (NG) and Gly-266. Position 270 (His-270) interacts with Mg(2+). ATP contacts are provided by residues 272–274 (HQS) and Ser-274. Positions 322, 328, and 340 each coordinate L-glutamate. ATP-binding residues include Arg-340, Arg-345, and Lys-353. Glu-358 lines the Mg(2+) pocket. Residue Arg-360 participates in L-glutamate binding. Tyr-398 carries the post-translational modification O-AMP-tyrosine.

It belongs to the glutamine synthetase family. As to quaternary structure, oligomer of 12 subunits arranged in the form of two hexameric ring. It depends on Mg(2+) as a cofactor.

The protein resides in the cytoplasm. It carries out the reaction L-glutamate + NH4(+) + ATP = L-glutamine + ADP + phosphate + H(+). With respect to regulation, the activity of this enzyme could be controlled by adenylation under conditions of abundant glutamine. Functionally, catalyzes the ATP-dependent biosynthesis of glutamine from glutamate and ammonia. This is Glutamine synthetase from Rhizobium leguminosarum bv. viciae.